The sequence spans 205 residues: Putative C-type lectin protein FPV001/FPV260 (205 aa).

Residues 84-187 (CPRDWISHNG…CSVRRYLVCK (104 aa)) form the C-type lectin domain.

This chain is Putative C-type lectin protein FPV001/FPV260, found in Fowlpox virus (strain NVSL) (FPV).